The primary structure comprises 482 residues: Protein DETOXIFICATION 9 (482 aa).

The next 12 helical transmembrane spans lie at Val32–Leu49, Ala64–Phe84, Phe111–Met131, Ile144–Val164, Pro180–Val200, Gly209–Met229, Ala261–Leu281, Ser289–Gly309, Ala332–Leu352, Ile374–Ile394, Ile403–Leu423, and Trp435–Phe455.

This sequence belongs to the multi antimicrobial extrusion (MATE) (TC 2.A.66.1) family.

The protein localises to the membrane. The polypeptide is Protein DETOXIFICATION 9 (Arabidopsis thaliana (Mouse-ear cress)).